The chain runs to 452 residues: tRNA-2-methylthio-N(6)-dimethylallyladenosine synthase (452 aa).

Residues 16-134 enclose the MTTase N-terminal domain; that stretch reads KRFFISTWGC…LPEYIERVKT (119 aa). Positions 25, 61, 95, 171, 175, and 178 each coordinate [4Fe-4S] cluster. In terms of domain architecture, Radical SAM core spans 157–387; that stretch reads RKSDIKAFVT…VEAVNEIMAR (231 aa). The 63-residue stretch at 390-452 folds into the TRAM domain; sequence KEFEGKTVEV…NSFSLTGEII (63 aa).

It belongs to the methylthiotransferase family. MiaB subfamily. Monomer. Requires [4Fe-4S] cluster as cofactor.

It localises to the cytoplasm. The enzyme catalyses N(6)-dimethylallyladenosine(37) in tRNA + (sulfur carrier)-SH + AH2 + 2 S-adenosyl-L-methionine = 2-methylsulfanyl-N(6)-dimethylallyladenosine(37) in tRNA + (sulfur carrier)-H + 5'-deoxyadenosine + L-methionine + A + S-adenosyl-L-homocysteine + 2 H(+). Catalyzes the methylthiolation of N6-(dimethylallyl)adenosine (i(6)A), leading to the formation of 2-methylthio-N6-(dimethylallyl)adenosine (ms(2)i(6)A) at position 37 in tRNAs that read codons beginning with uridine. In Clostridium novyi (strain NT), this protein is tRNA-2-methylthio-N(6)-dimethylallyladenosine synthase.